The following is a 271-amino-acid chain: Bifunctional protein FolD (271 aa).

NADP(+) contacts are provided by residues 154-156, Thr181, and Ile222; that span reads GRS.

The protein belongs to the tetrahydrofolate dehydrogenase/cyclohydrolase family. As to quaternary structure, homodimer.

It carries out the reaction (6R)-5,10-methylene-5,6,7,8-tetrahydrofolate + NADP(+) = (6R)-5,10-methenyltetrahydrofolate + NADPH. The catalysed reaction is (6R)-5,10-methenyltetrahydrofolate + H2O = (6R)-10-formyltetrahydrofolate + H(+). It functions in the pathway one-carbon metabolism; tetrahydrofolate interconversion. Functionally, catalyzes the oxidation of 5,10-methylenetetrahydrofolate to 5,10-methenyltetrahydrofolate and then the hydrolysis of 5,10-methenyltetrahydrofolate to 10-formyltetrahydrofolate. The sequence is that of Bifunctional protein FolD from Thermosipho melanesiensis (strain DSM 12029 / CIP 104789 / BI429).